The following is a 676-amino-acid chain: Methionine--tRNA ligase (676 aa).

Positions P15 to H25 match the 'HIGH' region motif. Residues C146, C149, C159, and C162 each contribute to the Zn(2+) site. The short motif at K332 to S336 is the 'KMSKS' region element. K335 is a binding site for ATP. Residues D575–K676 form the tRNA-binding domain.

The protein belongs to the class-I aminoacyl-tRNA synthetase family. MetG type 1 subfamily. As to quaternary structure, homodimer. Zn(2+) serves as cofactor.

The protein resides in the cytoplasm. It carries out the reaction tRNA(Met) + L-methionine + ATP = L-methionyl-tRNA(Met) + AMP + diphosphate. Its function is as follows. Is required not only for elongation of protein synthesis but also for the initiation of all mRNA translation through initiator tRNA(fMet) aminoacylation. The polypeptide is Methionine--tRNA ligase (Shewanella sp. (strain ANA-3)).